Reading from the N-terminus, the 196-residue chain is MSVLSRAVQLAFVALGLCLFFSNLVAAQPIAGPSLGVSVKSVNGVCRASKPCELEVTVRNTNTKKPATVLNWNTPLDPYADQLGVFEVRDSKGAVVPLDFIQIRRITPPPASDLVEIKAASSVKVKVALETLSRAELPAGTKYTITATGWWQAVWDQPKEQVVQSHLQELSGAFSGNFNSNSVQVTKVCSSSSPQQ.

The signal sequence occupies residues 1–27 (MSVLSRAVQLAFVALGLCLFFSNLVAA).

The protein resides in the secreted. This is an uncharacterized protein from Arthroderma benhamiae (strain ATCC MYA-4681 / CBS 112371) (Trichophyton mentagrophytes).